Consider the following 197-residue polypeptide: Endothelial cell-specific chemotaxis regulator (197 aa).

The N-terminal stretch at 1–23 (MGSVRETQLRWAILGFLLLQAAS) is a signal peptide. The Extracellular segment spans residues 24-113 (ETPSQFSTEA…PSPTSETVLT (90 aa)). The interval 40-107 (TVADHLPSSP…ADSTVPPSPT (68 aa)) is disordered. Positions 50-63 (GPTWSQSQKHTSGL) are enriched in polar residues. Over residues 64–82 (SADVPSSGRSSDSMSGDTS) the composition is skewed to low complexity. Over residues 83–107 (HNVTSTSPNMSFRTTADSTVPPSPT) the composition is skewed to polar residues. The chain crosses the membrane as a helical span at residues 114–134 (VAAFGVISFIAILVVVVIVLV). At 135-197 (SVVSLRFKCR…KGCPSAEKVL (63 aa)) the chain is on the cytoplasmic side. Disordered stretches follow at residues 146-172 (NKESEDPQKPGSSGLSESGSTANGEKE) and 178-197 (SMKNINMNNSKGCPSAEKVL). 2 stretches are compositionally biased toward polar residues: residues 155-168 (PGSSGLSESGSTAN) and 178-189 (SMKNINMNNSKG). S187 is subject to Phosphoserine.

It belongs to the ECSCR family. As to quaternary structure, interacts with FLNA. Interacts with the 20S proteasome subunit PSMA7. May be heavily O-glycosylated.

Its subcellular location is the cell membrane. It is found in the cytoplasm. Regulates endothelial chemotaxis and tube formation. Has a role in angiogenesis and apoptosis via modulation of the actin cytoskeleton and facilitation of proteasomal degradation of the apoptosis inhibitors BIRC3/IAP1 and BIRC2/IAP2. The polypeptide is Endothelial cell-specific chemotaxis regulator (ECSCR) (Bos taurus (Bovine)).